A 367-amino-acid chain; its full sequence is N6-succino-2-amino-2'-deoxyadenylate synthase (367 aa).

Ser-17 acts as the Proton acceptor in catalysis. ATP contacts are provided by Ser-17, Thr-18, Gly-19, Lys-20, and Gly-21. Ser-17 serves as a coordination point for dGMP. Ser-17 contributes to the Mg(2+) binding site. Asn-43 contacts dGMP. Gly-45, His-46, and Thr-47 together coordinate ATP. Gly-45 contacts Mg(2+). Residues Ser-128, Thr-129, and Arg-143 each contribute to the dGMP site. Gln-197 is an ATP binding site. Residue Thr-212 coordinates dGMP. Thr-284 is a binding site for Mg(2+). L-aspartate is bound by residues Thr-284, Val-285, and Arg-290. Positions 315, 318, and 354 each coordinate ATP.

It belongs to the Caudovirales PurZ family. Mg(2+) is required as a cofactor.

The catalysed reaction is dGMP + L-aspartate + ATP = (2S)-2-amino-2'-deoxyadenylo-succinate + ADP + phosphate + 2 H(+). The protein operates within purine metabolism. Involved in the synthesis of the atypical nucleotide dZTP (2-amino-2'-deoxyadenosine-5'-triphosphate). Catalyzes the condensation of aspartate with deoxyguanylate into dSMP (N6-succino-2-amino-2'-deoxyadenylate), which undergoes defumarylation and phosphorylation respectively by host PurB and guanylate/nucleoside diphosphate kinases to give dZTP. dZTP is integrated into the viral genome instead of adenine by the viral DNA polymerase. This Z-base probably completely replaces adenosine and forms a triple bond to the opposite T-base. The resulting non-standard viral DNA is called Z-genome. The chemically modified DNA is probably harder for the host bacteria to digest with nucleases or restriction enzymes. The polypeptide is N6-succino-2-amino-2'-deoxyadenylate synthase (Salmonella phage PMBT28).